A 181-amino-acid chain; its full sequence is Large ribosomal subunit protein uL5c (181 aa).

Belongs to the universal ribosomal protein uL5 family. In terms of assembly, part of the 50S ribosomal subunit; contacts the 5S rRNA.

It localises to the plastid. It is found in the chloroplast. Binds 5S rRNA, forms part of the central protuberance of the 50S subunit. The sequence is that of Large ribosomal subunit protein uL5c (rpl5) from Guillardia theta (Cryptophyte).